Here is a 274-residue protein sequence, read N- to C-terminus: MLSVAARSGPFAPVLSATSRGVAGALRPLLQGAVPAASEPPVLDVKRPFLCRESLSGQAAARPLVATVGLNVPASVRFSHTDVKVPDFSDYRRAEVLDSTKSSKESSEARKGFSYLVTATTTVGVAYAAKNVVSQFVSSMSASADVLAMSKIEIKLSDIPEGKNMAFKWRGKPLFVRHRTKKEIDQEAAVEVSQLRDPQHDLDRVKKPEWVILIGVCTHLGCVPIANAGDFGGYYCPCHGSHYDASGRIRKGPAPLNLEVPAYEFTSDDVVVVG.

Topologically, residues 79 to 110 (SHTDVKVPDFSDYRRAEVLDSTKSSKESSEAR) are mitochondrial matrix. The helical transmembrane segment at 111–137 (KGFSYLVTATTTVGVAYAAKNVVSQFV) threads the bilayer. Residues 138–274 (SSMSASADVL…FTSDDVVVVG (137 aa)) lie on the Mitochondrial intermembrane side of the membrane. One can recognise a Rieske domain in the interval 187–272 (EAAVEVSQLR…YEFTSDDVVV (86 aa)). [2Fe-2S] cluster contacts are provided by Cys-217, His-219, Cys-236, His-239, and Ser-241. A disulfide bridge connects residues Cys-222 and Cys-238.

This sequence belongs to the Rieske iron-sulfur protein family. In terms of assembly, component of the ubiquinol-cytochrome c oxidoreductase (cytochrome b-c1 complex, complex III, CIII), a multisubunit enzyme composed of 11 subunits. The complex is composed of 3 respiratory subunits cytochrome b, cytochrome c1 and Rieske protein UQCRFS1, 2 core protein subunits UQCRC1/QCR1 and UQCRC2/QCR2, and 6 low-molecular weight protein subunits UQCRH/QCR6, UQCRB/QCR7, UQCRQ/QCR8, UQCR10/QCR9, UQCR11/QCR10 and subunit 9, the cleavage product of Rieske protein UQCRFS1. The complex exists as an obligatory dimer and forms supercomplexes (SCs) in the inner mitochondrial membrane with NADH-ubiquinone oxidoreductase (complex I, CI) and cytochrome c oxidase (complex IV, CIV), resulting in different assemblies (supercomplex SCI(1)III(2)IV(1) and megacomplex MCI(2)III(2)IV(2)). Incorporation of the Rieske protein UQCRFS1 is the penultimate step in complex III assembly. Interacts with TTC19, which is involved in the clearance of UQCRFS1 fragments. As to quaternary structure, component of the ubiquinol-cytochrome c oxidoreductase (cytochrome b-c1 complex, complex III, CIII). Subunit 9 corresponds to the mitochondrial targeting sequence (MTS) of Rieske protein UQCRFS1. It is retained after processing and incorporated inside complex III, where it remains bound to the complex and localizes between the 2 core subunits UQCRC1/QCR1 and UQCRC2/QCR2. [2Fe-2S] cluster serves as cofactor. Proteolytic processing is necessary for the correct insertion of UQCRFS1 in the complex III dimer. Several fragments are generated during UQCRFS1 insertion, most probably due to the endogenous matrix-processing peptidase (MPP) activity of the 2 core protein subunits UQCRC1/QCR1 and UQCRC2/QCR2, which are homologous to the 2 mitochondrial-processing peptidase (MPP) subunits beta-MPP and alpha-MPP respectively. The action of the protease is also necessary for the clearance of the UQCRFS1 fragments.

It is found in the mitochondrion inner membrane. The enzyme catalyses a quinol + 2 Fe(III)-[cytochrome c](out) = a quinone + 2 Fe(II)-[cytochrome c](out) + 2 H(+)(out). Functionally, component of the ubiquinol-cytochrome c oxidoreductase, a multisubunit transmembrane complex that is part of the mitochondrial electron transport chain which drives oxidative phosphorylation. The respiratory chain contains 3 multisubunit complexes succinate dehydrogenase (complex II, CII), ubiquinol-cytochrome c oxidoreductase (cytochrome b-c1 complex, complex III, CIII) and cytochrome c oxidase (complex IV, CIV), that cooperate to transfer electrons derived from NADH and succinate to molecular oxygen, creating an electrochemical gradient over the inner membrane that drives transmembrane transport and the ATP synthase. The cytochrome b-c1 complex catalyzes electron transfer from ubiquinol to cytochrome c, linking this redox reaction to translocation of protons across the mitochondrial inner membrane, with protons being carried across the membrane as hydrogens on the quinol. In the process called Q cycle, 2 protons are consumed from the matrix, 4 protons are released into the intermembrane space and 2 electrons are passed to cytochrome c. The Rieske protein is a catalytic core subunit containing a [2Fe-2S] iron-sulfur cluster. It cycles between 2 conformational states during catalysis to transfer electrons from the quinol bound in the Q(0) site in cytochrome b to cytochrome c1. Incorporation of UQCRFS1 is the penultimate step in complex III assembly. Component of the ubiquinol-cytochrome c oxidoreductase (cytochrome b-c1 complex, complex III, CIII). UQCRFS1 undergoes proteolytic processing once it is incorporated in the complex III dimer. One of the fragments, called subunit 9, corresponds to its mitochondrial targeting sequence (MTS). The proteolytic processing is necessary for the correct insertion of UQCRFS1 in the complex III dimer, but the persistence of UQCRFS1-derived fragments may prevent newly imported UQCRFS1 to be processed and assembled into complex III and is detrimental for the complex III structure and function. The polypeptide is Cytochrome b-c1 complex subunit Rieske, mitochondrial (Mus musculus (Mouse)).